We begin with the raw amino-acid sequence, 310 residues long: MAAGLSTAVTFKPLHRSFSSSSTDFRLRLPKSLSGFSPSLRFKRFSVCYVVEERRQNSPIENDERPESTSSTNAIDAEYLALRLAEKLERKKSERSTYLIAAMLSSFGITSMAVMAVYYRFSWQMEGGEISMLEMFGTFALSVGAAVGMEFWARWAHRALWHASLWNMHESHHKPREGPFELNDVFAIVNAGPAIGLLSYGFFNKGLVPGLCFGAGLGITVFGIAYMFVHDGLVHKRFPVGPIADVPYLRKVAAAHQLHHTDKFNGVPYGLFLGPKELEEVGGNEELDKEISRRIKSYKKASGSGSSSSS.

Residues 1 to 51 (MAAGLSTAVTFKPLHRSFSSSSTDFRLRLPKSLSGFSPSLRFKRFSVCYVV) constitute a chloroplast transit peptide. 2 consecutive transmembrane segments (helical) span residues 98–118 (YLIA…MAVY) and 132–152 (MLEM…MEFW). In terms of domain architecture, Fatty acid hydroxylase spans 145–272 (AAVGMEFWAR…KFNGVPYGLF (128 aa)). The short motif at 157–162 (HRALWH) is the Histidine box-1 element. The short motif at 169–173 (HESHH) is the Histidine box-2 element. The next 2 membrane-spanning stretches (helical) occupy residues 183 to 203 (NDVF…YGFF) and 208 to 228 (VPGL…AYMF). A Histidine box-3 motif is present at residues 230-235 (HDGLVH). Positions 256–260 (HQLHH) match the Histidine box-4 motif.

Belongs to the sterol desaturase family. In terms of assembly, homodimer. In terms of tissue distribution, expressed in leaves, flowers, stems, roots and siliques.

It is found in the plastid. The protein localises to the chloroplast membrane. The catalysed reaction is all-trans-beta-carotene + 4 reduced [2Fe-2S]-[ferredoxin] + 2 O2 + 4 H(+) = all-trans-zeaxanthin + 4 oxidized [2Fe-2S]-[ferredoxin] + 2 H2O. Nonheme diiron monooxygenase involved in the biosynthesis of xanthophylls. Specific for beta-ring hydroxylations of beta-carotene. Also has a low activity toward the beta- and epsilon-rings of alpha-carotene. No activity with acyclic carotenoids such as lycopene and neurosporene. Uses ferredoxin as an electron donor. In Arabidopsis thaliana (Mouse-ear cress), this protein is Beta-carotene 3-hydroxylase 1, chloroplastic (BETA-OHASE 1).